Here is a 332-residue protein sequence, read N- to C-terminus: NAD-dependent protein deacetylase hst2 (332 aa).

The Deacetylase sirtuin-type domain occupies 7–269 (KHVDSSKHLE…RALCKLLGWS (263 aa)). Residues 35-55 (GAGI…TGIY) and 118-121 (QNID) contribute to the NAD(+) site. The active-site Proton acceptor is the histidine 138. Zn(2+) contacts are provided by cysteine 146, cysteine 149, cysteine 170, and cysteine 173. Residues 210–212 (GTS), 235–237 (NRE), and cysteine 255 each bind NAD(+).

This sequence belongs to the sirtuin family. Class I subfamily. Zn(2+) is required as a cofactor.

It localises to the cytoplasm. It is found in the nucleus. The enzyme catalyses N(6)-acetyl-L-lysyl-[protein] + NAD(+) + H2O = 2''-O-acetyl-ADP-D-ribose + nicotinamide + L-lysyl-[protein]. Functionally, NAD-dependent histone deacetylase, which could function in telomeric silencing, cell cycle progression and chromosome stability. The sequence is that of NAD-dependent protein deacetylase hst2 (hst2) from Schizosaccharomyces pombe (strain 972 / ATCC 24843) (Fission yeast).